Here is a 203-residue protein sequence, read N- to C-terminus: Akirin-2 (203 aa).

Residues serine 18 and serine 21 each carry the phosphoserine modification. Positions 22–27 (PKRRRC) match the Nuclear localization signal motif. Serine 57 is modified (phosphoserine). Residues 200–203 (SYVS) carry the SYVS motif motif.

Belongs to the akirin family. In terms of assembly, homodimer. Interacts with IPO9; the interaction is direct. Associates (via SYVS motif) with 20S and 26S proteasomes. Interacts with SMARCD1; promoting SWI/SNF complex recruitment. Interacts with NFKBIZ. Interacts with YWHAB. Post-translationally, polyubiquitinated. Polyubiquitination is dependent of UBR5 that extends pre-ubiquitinated AKIRIN2. As to expression, widely expressed with the highest expression in peripheral blood leukocytes.

It is found in the nucleus. The protein resides in the cytoplasm. It localises to the membrane. In terms of biological role, molecular adapter that acts as a bridge between a variety of multiprotein complexes, and which is involved in embryonic development, immunity, myogenesis and brain development. Plays a key role in nuclear protein degradation by promoting import of proteasomes into the nucleus: directly binds to fully assembled 20S proteasomes at one end and to nuclear import receptor IPO9 at the other end, bridging them together and mediating the import of pre-assembled proteasome complexes through the nuclear pore. Involved in innate immunity by regulating the production of interleukin-6 (IL6) downstream of Toll-like receptor (TLR): acts by bridging the NF-kappa-B inhibitor NFKBIZ and the SWI/SNF complex, leading to promote induction of IL6. Also involved in adaptive immunity by promoting B-cell activation. Involved in brain development: required for the survival and proliferation of cerebral cortical progenitor cells. Involved in myogenesis: required for skeletal muscle formation and skeletal development, possibly by regulating expression of muscle differentiation factors. Also plays a role in facilitating interdigital tissue regression during limb development. The protein is Akirin-2 of Homo sapiens (Human).